The chain runs to 360 residues: Phosphoserine aminotransferase (360 aa).

Arg-42 provides a ligand contact to L-glutamate. 4 residues coordinate pyridoxal 5'-phosphate: Trp-102, Thr-152, Asp-171, and Gln-194. Lys-195 is modified (N6-(pyridoxal phosphate)lysine). Pyridoxal 5'-phosphate is bound at residue 237 to 238; it reads NT.

It belongs to the class-V pyridoxal-phosphate-dependent aminotransferase family. SerC subfamily. In terms of assembly, homodimer. Pyridoxal 5'-phosphate serves as cofactor.

It is found in the cytoplasm. It catalyses the reaction O-phospho-L-serine + 2-oxoglutarate = 3-phosphooxypyruvate + L-glutamate. It carries out the reaction 4-(phosphooxy)-L-threonine + 2-oxoglutarate = (R)-3-hydroxy-2-oxo-4-phosphooxybutanoate + L-glutamate. It participates in amino-acid biosynthesis; L-serine biosynthesis; L-serine from 3-phospho-D-glycerate: step 2/3. It functions in the pathway cofactor biosynthesis; pyridoxine 5'-phosphate biosynthesis; pyridoxine 5'-phosphate from D-erythrose 4-phosphate: step 3/5. Functionally, catalyzes the reversible conversion of 3-phosphohydroxypyruvate to phosphoserine and of 3-hydroxy-2-oxo-4-phosphonooxybutanoate to phosphohydroxythreonine. The chain is Phosphoserine aminotransferase from Coxiella burnetii (strain RSA 493 / Nine Mile phase I).